We begin with the raw amino-acid sequence, 1405 residues long: Centlein (1405 aa).

Residues 1 to 14 (MAARSPPSPHPSPP) show a composition bias toward pro residues. The segment at 1 to 79 (MAARSPPSPH…GGAAPAHAPL (79 aa)) is disordered. Ala-2 bears the N-acetylalanine mark. A phosphoserine mark is found at Ser-5 and Ser-22. Positions 48–58 (VVADESDKIWV) are enriched in basic and acidic residues. Over residues 61-71 (EGSGGRRGPGG) the composition is skewed to gly residues. Residues 95–126 (EEAMVTRTQLLEEELSSLKEELALCQADKEFV) adopt a coiled-coil conformation. Disordered regions lie at residues 421–450 (KLKEKLQESQGAPLPLPQESDPDYSAQVPH) and 493–529 (SRKSIMTSAEGKHKEPPVKRSRSLSPKSSFTDSEELQ). 2 coiled-coil regions span residues 613–655 (NELA…ELNR) and 681–793 (KNGK…ELIN). Positions 865 to 917 (WEDVSESSSDSEAQTSQTLGTIIVETSQKISPTEDGKDQKESDPTEDSQTQGK) are disordered. The segment covering 877–895 (AQTSQTLGTIIVETSQKIS) has biased composition (polar residues). Basic and acidic residues predominate over residues 896 to 907 (PTEDGKDQKESD). A coiled-coil region spans residues 980 to 1311 (NIILLRERII…IRELKKMKKN (332 aa)). Thr-1343 is subject to Phosphothreonine.

Interacts with CEP250 and CEP68. Interacts with NEK2; the interaction leads to phosphorylation of CNTLN. Phosphorylated directly or indirectly by NEK2.

The protein localises to the cytoplasm. It localises to the cytoskeleton. It is found in the microtubule organizing center. Its subcellular location is the centrosome. The protein resides in the centriole. Its function is as follows. Required for centrosome cohesion and recruitment of CEP68 to centrosomes. This chain is Centlein (CNTLN), found in Homo sapiens (Human).